A 255-amino-acid polypeptide reads, in one-letter code: 5'-nucleotidase SurE (255 aa).

4 residues coordinate a divalent metal cation: Asp-8, Asp-9, Ser-40, and Asn-93.

Belongs to the SurE nucleotidase family. It depends on a divalent metal cation as a cofactor.

Its subcellular location is the cytoplasm. The catalysed reaction is a ribonucleoside 5'-phosphate + H2O = a ribonucleoside + phosphate. Functionally, nucleotidase that shows phosphatase activity on nucleoside 5'-monophosphates. The protein is 5'-nucleotidase SurE of Nitrobacter winogradskyi (strain ATCC 25391 / DSM 10237 / CIP 104748 / NCIMB 11846 / Nb-255).